The sequence spans 285 residues: Type II secretion system protein C (285 aa).

The Cytoplasmic portion of the chain corresponds to 1 to 27; the sequence is MARLQAFKDPSFHSLVATFRSLPLIRR. Residues 28-48 form a helical membrane-spanning segment; that stretch reads FVLGLILLLICQQLAVLTWRF. Residues 49–285 lie on the Periplasmic side of the membrane; sequence LLPEDSRIVG…DIYLALDGDH (237 aa).

The protein belongs to the GSP C family.

Its subcellular location is the cell inner membrane. Functionally, involved in a type II secretion system (T2SS, formerly general secretion pathway, GSP) for the export of proteins. Required for the translocation of the multiple pectic enzymes. The protein is Type II secretion system protein C (outC) of Pectobacterium carotovorum subsp. carotovorum (Erwinia carotovora subsp. carotovora).